Here is a 113-residue protein sequence, read N- to C-terminus: Hydrogenase maturation factor HypA (113 aa).

His2 contributes to the Ni(2+) binding site. 4 residues coordinate Zn(2+): Cys70, Cys73, Cys86, and Cys88.

This sequence belongs to the HypA/HybF family.

Its function is as follows. Involved in the maturation of [NiFe] hydrogenases. Required for nickel insertion into the metal center of the hydrogenase. This is Hydrogenase maturation factor HypA from Trichormus variabilis (strain ATCC 29413 / PCC 7937) (Anabaena variabilis).